The following is a 127-amino-acid chain: uncharacterized protein (127 aa).

Residues 1–34 (MKNPESSGVSSSPQIQRVSPSSSSTSPSPPSIGT) are disordered. The segment covering 9-34 (VSSSPQIQRVSPSSSSTSPSPPSIGT) has biased composition (low complexity). Helical transmembrane passes span 47–67 (IAAV…PLAM) and 84–104 (TIAV…YLLV).

Its subcellular location is the membrane. This is an uncharacterized protein from Saccharomyces cerevisiae (strain ATCC 204508 / S288c) (Baker's yeast).